The chain runs to 1273 residues: Kinesin-like protein KIN-14A (1273 aa).

The interval M1–L52 is disordered. Residues A59 to Y89 are a coiled coil. Residues N142–T456 enclose the Kinesin motor domain. G223–T230 provides a ligand contact to ATP. Coiled-coil stretches lie at residues I466–L511, Q559–S595, and T627–E657. Disordered regions lie at residues K827–V847 and Q1136–S1157. Residues T830 to P846 are compositionally biased toward low complexity.

Belongs to the TRAFAC class myosin-kinesin ATPase superfamily. Kinesin family. KIN-14 subfamily. In terms of assembly, homodimer and heterodimer with KCA2. Interacts with CDKA-1. Interacts with AL1, a geminivirus (TGMV) protein essential for viral replication. Interacts with LUE1/KSS. In terms of processing, part of the phosphorylation is not CDK-dependent. In terms of tissue distribution, widely expressed.

It is found in the nucleus. Its subcellular location is the cytoplasm. It localises to the cytoskeleton. The protein resides in the spindle. The protein localises to the chromosome. It is found in the cell membrane. Its subcellular location is the phragmoplast. Functionally, kinesin-like protein required for chloroplast movements and anchor to the plasma membrane. Mediates chloroplast movement via chloroplast actin (cp-actin) filaments. Required for the chloroplast avoidance response under high intensity blue light. Mediates redundantly with CHUP1 the nuclear avoidance response under high intensity blue light. May act as a mitotic kinesin. Probably involved in division plane determination. This chain is Kinesin-like protein KIN-14A, found in Arabidopsis thaliana (Mouse-ear cress).